Here is a 628-residue protein sequence, read N- to C-terminus: DNA mismatch repair protein MutL (628 aa).

The segment at 350-402 is disordered; sequence GLPFDVSESQGNDNHINNGKSRETKSERELYERRPNPFENRLMKESNSPSVGK. Polar residues predominate over residues 356-368; that stretch reads SESQGNDNHINNG. Positions 369–393 are enriched in basic and acidic residues; sequence KSRETKSERELYERRPNPFENRLMK.

It belongs to the DNA mismatch repair MutL/HexB family.

In terms of biological role, this protein is involved in the repair of mismatches in DNA. It is required for dam-dependent methyl-directed DNA mismatch repair. May act as a 'molecular matchmaker', a protein that promotes the formation of a stable complex between two or more DNA-binding proteins in an ATP-dependent manner without itself being part of a final effector complex. The protein is DNA mismatch repair protein MutL of Wolbachia sp. subsp. Brugia malayi (strain TRS).